We begin with the raw amino-acid sequence, 134 residues long: Probable RNA-binding protein MJ0652 (134 aa).

One can recognise a CRM domain in the interval 11 to 108 (RKLTGKMKRM…REGWKKYLAK (98 aa)).

In Methanocaldococcus jannaschii (strain ATCC 43067 / DSM 2661 / JAL-1 / JCM 10045 / NBRC 100440) (Methanococcus jannaschii), this protein is Probable RNA-binding protein MJ0652.